Reading from the N-terminus, the 415-residue chain is Serine hydroxymethyltransferase (415 aa).

Residues Leu-121 and 125–127 contribute to the (6S)-5,6,7,8-tetrahydrofolate site; that span reads GHL. Lys-230 bears the N6-(pyridoxal phosphate)lysine mark. (6S)-5,6,7,8-tetrahydrofolate contacts are provided by residues Glu-246 and 354-356; that span reads SPF.

It belongs to the SHMT family. Homodimer. It depends on pyridoxal 5'-phosphate as a cofactor.

The protein resides in the cytoplasm. It catalyses the reaction (6R)-5,10-methylene-5,6,7,8-tetrahydrofolate + glycine + H2O = (6S)-5,6,7,8-tetrahydrofolate + L-serine. It participates in one-carbon metabolism; tetrahydrofolate interconversion. Its pathway is amino-acid biosynthesis; glycine biosynthesis; glycine from L-serine: step 1/1. Its function is as follows. Catalyzes the reversible interconversion of serine and glycine with tetrahydrofolate (THF) serving as the one-carbon carrier. This reaction serves as the major source of one-carbon groups required for the biosynthesis of purines, thymidylate, methionine, and other important biomolecules. Also exhibits THF-independent aldolase activity toward beta-hydroxyamino acids, producing glycine and aldehydes, via a retro-aldol mechanism. The polypeptide is Serine hydroxymethyltransferase (Bdellovibrio bacteriovorus (strain ATCC 15356 / DSM 50701 / NCIMB 9529 / HD100)).